A 556-amino-acid polypeptide reads, in one-letter code: Potassium-transporting ATPase potassium-binding subunit (556 aa).

A run of 10 helical transmembrane segments spans residues 6–26 (AGLI…VPLG), 65–85 (GVLA…LVQG), 133–153 (GLAV…VALV), 176–196 (LRIL…GGAI), 249–269 (PTAW…FSLP), 283–303 (YAIA…MLWF), 378–398 (GLYG…LMVG), 419–439 (YFLV…ALPG), 483–503 (ALGL…LALA), and 526–546 (FVGM…LPML).

Belongs to the KdpA family. The system is composed of three essential subunits: KdpA, KdpB and KdpC.

The protein resides in the cell membrane. Part of the high-affinity ATP-driven potassium transport (or Kdp) system, which catalyzes the hydrolysis of ATP coupled with the electrogenic transport of potassium into the cytoplasm. This subunit binds the extracellular potassium ions and delivers the ions to the membrane domain of KdpB through an intramembrane tunnel. The protein is Potassium-transporting ATPase potassium-binding subunit of Mycobacterium avium (strain 104).